The sequence spans 290 residues: Elongation factor Ts (290 aa).

Positions 87 to 90 are involved in Mg(2+) ion dislocation from EF-Tu; it reads TDFV.

It belongs to the EF-Ts family.

The protein localises to the cytoplasm. Associates with the EF-Tu.GDP complex and induces the exchange of GDP to GTP. It remains bound to the aminoacyl-tRNA.EF-Tu.GTP complex up to the GTP hydrolysis stage on the ribosome. This chain is Elongation factor Ts (tsf), found in Treponema pallidum (strain Nichols).